Here is a 283-residue protein sequence, read N- to C-terminus: uncharacterized protein (283 aa).

Residues 172–270 (EAIRDYIDER…ERSPSEYRRQ (99 aa)) form the HTH araC/xylS-type domain. 2 DNA-binding regions (H-T-H motif) span residues 189–210 (ESVAQAFYISPNYLSHLFQKTG) and 237–260 (VKEVAHACGFVDSNYFCRLFRKNT).

This is an uncharacterized protein from Escherichia coli (strain K12).